Here is a 196-residue protein sequence, read N- to C-terminus: Peptide deformylase (196 aa).

Residues C103 and H145 each contribute to the Fe cation site. The active site involves E146. H149 lines the Fe cation pocket.

This sequence belongs to the polypeptide deformylase family. Requires Fe(2+) as cofactor.

The catalysed reaction is N-terminal N-formyl-L-methionyl-[peptide] + H2O = N-terminal L-methionyl-[peptide] + formate. Functionally, removes the formyl group from the N-terminal Met of newly synthesized proteins. Requires at least a dipeptide for an efficient rate of reaction. N-terminal L-methionine is a prerequisite for activity but the enzyme has broad specificity at other positions. In Rhodococcus opacus (strain B4), this protein is Peptide deformylase.